Consider the following 654-residue polypeptide: NADH-ubiquinone oxidoreductase chain 5 (654 aa).

The next 16 membrane-spanning stretches (helical) occupy residues M1–R21, L30–V50, F76–V96, F113–Y133, V135–F155, F178–F198, L200–A220, T241–L261, L274–L294, V301–S320, V324–V346, L365–F385, S406–I426, P451–V471, F510–F530, and T612–G632.

It belongs to the complex I subunit 5 family.

Its subcellular location is the mitochondrion inner membrane. It catalyses the reaction a ubiquinone + NADH + 5 H(+)(in) = a ubiquinol + NAD(+) + 4 H(+)(out). Core subunit of the mitochondrial membrane respiratory chain NADH dehydrogenase (Complex I) that is believed to belong to the minimal assembly required for catalysis. Complex I functions in the transfer of electrons from NADH to the respiratory chain. The immediate electron acceptor for the enzyme is believed to be ubiquinone. The sequence is that of NADH-ubiquinone oxidoreductase chain 5 (ND5) from Rhizopus stolonifer (Rhizopus nigricans).